The chain runs to 360 residues: Decorin (360 aa).

An N-terminal signal peptide occupies residues 1–16 (MKATIIFLLLAQVSWA). Residues 17 to 30 (GPFQQRGLFDFMLE) constitute a propeptide that is removed on maturation. The O-linked (Xyl...) (glycosaminoglycan) serine glycan is linked to serine 34. 2 disulfide bridges follow: cysteine 55-cysteine 61 and cysteine 59-cysteine 68. LRR repeat units follow at residues 74–94 (DKVP…NNKI), 95–118 (TEIK…NNKI), 119–142 (SKIS…KNHL), 143–163 (KELP…ENEI), 164–187 (TKVR…TNPL), 188–213 (KSSG…DTNI), 214–234 (TTIP…GNKI), 235–258 (TKVD…FNSI), 259–282 (SAVD…NNKL), 283–305 (IRVP…NNNI), 306–335 (SAVG…SNPV), and 336–360 (QYWE…GNYK). Asparagine 212 carries N-linked (GlcNAc...) asparagine glycosylation. Residues asparagine 263 and asparagine 304 are each glycosylated (N-linked (GlcNAc...) asparagine). Cysteine 314 and cysteine 347 are disulfide-bonded.

It belongs to the small leucine-rich proteoglycan (SLRP) family. SLRP class I subfamily. As to quaternary structure, binds to type I and type II collagen, fibronectin and TGF-beta. Forms a ternary complex with MFAP2 and ELN. Interacts with DPT. In terms of processing, the attached glycosaminoglycan chain can be either chondroitin sulfate or dermatan sulfate depending upon the tissue of origin.

It is found in the secreted. The protein resides in the extracellular space. Its subcellular location is the extracellular matrix. Functionally, may affect the rate of fibrils formation. This is Decorin (DCN) from Canis lupus familiaris (Dog).